Consider the following 356-residue polypeptide: NADH-quinone oxidoreductase subunit H (356 aa).

Transmembrane regions (helical) follow at residues Thr17–Ala37, Pro51–Leu71, Val83–Val103, Val116–Gly136, Ile162–Val182, Leu202–Glu222, Ile261–Pro281, Leu295–Ala315, and Val334–Pro354.

It belongs to the complex I subunit 1 family. NDH-1 is composed of 14 different subunits. Subunits NuoA, H, J, K, L, M, N constitute the membrane sector of the complex.

The protein localises to the cell inner membrane. The catalysed reaction is a quinone + NADH + 5 H(+)(in) = a quinol + NAD(+) + 4 H(+)(out). Its function is as follows. NDH-1 shuttles electrons from NADH, via FMN and iron-sulfur (Fe-S) centers, to quinones in the respiratory chain. The immediate electron acceptor for the enzyme in this species is believed to be ubiquinone. Couples the redox reaction to proton translocation (for every two electrons transferred, four hydrogen ions are translocated across the cytoplasmic membrane), and thus conserves the redox energy in a proton gradient. This subunit may bind ubiquinone. In Caulobacter vibrioides (strain ATCC 19089 / CIP 103742 / CB 15) (Caulobacter crescentus), this protein is NADH-quinone oxidoreductase subunit H.